We begin with the raw amino-acid sequence, 177 residues long: Coatomer subunit zeta-1 (177 aa).

This sequence belongs to the adaptor complexes small subunit family. In terms of assembly, oligomeric complex that consists of at least the alpha, beta, beta', gamma, delta, epsilon and zeta subunits.

Its subcellular location is the cytoplasm. The protein localises to the golgi apparatus membrane. It is found in the cytoplasmic vesicle. It localises to the COPI-coated vesicle membrane. Functionally, the coatomer is a cytosolic protein complex that binds to dilysine motifs and reversibly associates with Golgi non-clathrin-coated vesicles, which further mediate biosynthetic protein transport from the ER, via the Golgi up to the trans Golgi network. Coatomer complex is required for budding from Golgi membranes, and is essential for the retrograde Golgi-to-ER transport of dilysine-tagged proteins. The zeta subunit may be involved in regulating the coat assembly and, hence, the rate of biosynthetic protein transport due to its association-dissociation properties with the coatomer complex. The protein is Coatomer subunit zeta-1 of Arabidopsis thaliana (Mouse-ear cress).